The chain runs to 414 residues: Glucose-1-phosphate adenylyltransferase (414 aa).

Residues Y103, G168, E183–K184, and S201 each bind alpha-D-glucose 1-phosphate.

The protein belongs to the bacterial/plant glucose-1-phosphate adenylyltransferase family. As to quaternary structure, homotetramer.

It carries out the reaction alpha-D-glucose 1-phosphate + ATP + H(+) = ADP-alpha-D-glucose + diphosphate. It participates in glycan biosynthesis; glycogen biosynthesis. Involved in the biosynthesis of ADP-glucose, a building block required for the elongation reactions to produce glycogen. Catalyzes the reaction between ATP and alpha-D-glucose 1-phosphate (G1P) to produce pyrophosphate and ADP-Glc. This is Glucose-1-phosphate adenylyltransferase from Thermus thermophilus (strain ATCC 27634 / DSM 579 / HB8).